Here is a 170-residue protein sequence, read N- to C-terminus: MENIILIGMPLSGKSTLGRELSKILKYDLIDTDTLIEEMEDKSIKEIFKIYGEDYFREKELKIINKLKKESNKVISTGGGLPIYNKNIYELKKIGFTVYLKVPLEELIKRMVKKEDDARPLLKNDDTKFLEEMYKNRIEIYEKAHTIICNTNYEESLIAIVKAYKKWKGI.

11–16 is an ATP binding site; sequence LSGKST. Serine 15 is a Mg(2+) binding site. Substrate is bound by residues aspartate 33, arginine 57, and glycine 79. Arginine 119 contacts ATP. Arginine 137 contacts substrate.

This sequence belongs to the shikimate kinase family. Monomer. Mg(2+) serves as cofactor.

It localises to the cytoplasm. It catalyses the reaction shikimate + ATP = 3-phosphoshikimate + ADP + H(+). The protein operates within metabolic intermediate biosynthesis; chorismate biosynthesis; chorismate from D-erythrose 4-phosphate and phosphoenolpyruvate: step 5/7. Catalyzes the specific phosphorylation of the 3-hydroxyl group of shikimic acid using ATP as a cosubstrate. This Clostridium botulinum (strain Loch Maree / Type A3) protein is Shikimate kinase.